A 291-amino-acid polypeptide reads, in one-letter code: Beta-lactamase Toho-1 (291 aa).

The N-terminal stretch at 1–29 (MMTQSIRRSMLTVMATLPLLFSSATLHAQ) is a signal peptide. Catalysis depends on Ser-73, which acts as the Acyl-ester intermediate. 237–239 (KTG) lines the substrate pocket.

It belongs to the class-A beta-lactamase family. In terms of assembly, monomer.

It catalyses the reaction a beta-lactam + H2O = a substituted beta-amino acid. In terms of biological role, has strong cefotaxime-hydrolyzing activity. The chain is Beta-lactamase Toho-1 (bla) from Escherichia coli.